A 431-amino-acid chain; its full sequence is Argininosuccinate lyase (431 aa).

The protein belongs to the lyase 1 family. Argininosuccinate lyase subfamily.

It is found in the cytoplasm. The enzyme catalyses 2-(N(omega)-L-arginino)succinate = fumarate + L-arginine. It participates in amino-acid biosynthesis; L-arginine biosynthesis; L-arginine from L-ornithine and carbamoyl phosphate: step 3/3. In Xanthomonas campestris pv. campestris (strain ATCC 33913 / DSM 3586 / NCPPB 528 / LMG 568 / P 25), this protein is Argininosuccinate lyase.